Here is a 520-residue protein sequence, read N- to C-terminus: Aldehyde dehydrogenase 5, mitochondrial (520 aa).

The N-terminal 23 residues, 1 to 23 (MLSRTRAAAPNSRIFTRSLLRLY), are a transit peptide targeting the mitochondrion. 266-271 (GSTATG) provides a ligand contact to NAD(+). Catalysis depends on Glu288, which acts as the Proton acceptor. Cys322 acts as the Nucleophile in catalysis.

Belongs to the aldehyde dehydrogenase family.

Its subcellular location is the mitochondrion matrix. The enzyme catalyses an aldehyde + NADP(+) + H2O = a carboxylate + NADPH + 2 H(+). It carries out the reaction an aldehyde + NAD(+) + H2O = a carboxylate + NADH + 2 H(+). The protein operates within alcohol metabolism; ethanol degradation; acetate from ethanol: step 2/2. With respect to regulation, induced by potassium ions. In terms of biological role, minor mitochondrial aldehyde dehydrogenase isoform. Plays a role in regulation or biosynthesis of electron transport chain components. Involved in the biosynthesis of acetate during anaerobic growth on glucose. In Saccharomyces cerevisiae (strain YJM789) (Baker's yeast), this protein is Aldehyde dehydrogenase 5, mitochondrial (ALD5).